The chain runs to 471 residues: NADH-quinone oxidoreductase subunit N 1 (471 aa).

The next 14 helical transmembrane spans lie at 11 to 31 (ALVP…AGAW), 39 to 59 (TIHV…ALAA), 81 to 101 (AIVL…VAGH), 105 to 125 (TEFV…AGAG), 127 to 147 (LIML…LAGW), 162 to 182 (LAGA…FGVA), 200 to 220 (AAAA…AGAV), 234 to 254 (PPPV…VAFY), 270 to 290 (LITA…AFAQ), 296 to 316 (MLGY…AVAG), 324 to 344 (ALLL…AVVA), 365 to 385 (ALAL…AVFV), 398 to 418 (GLAW…FYYL), and 444 to 464 (AVAL…GIVL).

The protein belongs to the complex I subunit 2 family. In terms of assembly, NDH-1 is composed of 14 different subunits. Subunits NuoA, H, J, K, L, M, N constitute the membrane sector of the complex.

The protein localises to the cell membrane. It catalyses the reaction a quinone + NADH + 5 H(+)(in) = a quinol + NAD(+) + 4 H(+)(out). Its function is as follows. NDH-1 shuttles electrons from NADH, via FMN and iron-sulfur (Fe-S) centers, to quinones in the respiratory chain. The immediate electron acceptor for the enzyme in this species is believed to be a menaquinone. Couples the redox reaction to proton translocation (for every two electrons transferred, four hydrogen ions are translocated across the cytoplasmic membrane), and thus conserves the redox energy in a proton gradient. This is NADH-quinone oxidoreductase subunit N 1 from Streptomyces griseus subsp. griseus (strain JCM 4626 / CBS 651.72 / NBRC 13350 / KCC S-0626 / ISP 5235).